We begin with the raw amino-acid sequence, 502 residues long: MSQEKYIMAIDQGTTSSRAIIFNKKGEKVSSSQKEFTQIFPQAGWVEHNANEIWNSVQSVIAGAFIESGVKPNQIEAIGITNQRETTVVWDKKTGLPIYNAIVWQSRQTAPLAEQLKSQGYVEKFHEKTGLIIDAYFSATKVRWILDHVEGAQERAEKGELLFGTIDTWLVWKLTDGAAHVTDYSNAARTMLYNIKELKWDDEILEILNIPKAILPEVRSNSEIYGKTAPFHFYGGEVPISGMAGDQQAALFGQLAFEPGMVKNTYGTGSFIIMNTGEEMQLSENNLLTTIGYGINGKVYYALEGSIFIAGSAIQWLRDGLRMVENSPESEKYARDSHNNDEVYVVPAFTGLGAPYWNQNARGSVFGLTRGTSKEDFIKATLQSIAYQVRDIIDTMQVDTQTAIQVLKVDGGAAMNNFLMQFQADILGIDIARAKNLETTALGAAFLAGLSVGYWKDLDELKLLNETGELFEPSMNESRKEQLYKGWKKAVKATQVFAEVDD.

Thr14 contacts ADP. 3 residues coordinate ATP: Thr14, Thr15, and Ser16. Thr14 is a binding site for sn-glycerol 3-phosphate. Arg18 contacts ADP. Positions 84, 85, and 136 each coordinate sn-glycerol 3-phosphate. Positions 84, 85, and 136 each coordinate glycerol. Position 232 is a phosphohistidine; by HPr (His232). Residue Asp246 coordinates sn-glycerol 3-phosphate. Asp246 and Gln247 together coordinate glycerol. ADP is bound by residues Thr268 and Gly311. ATP is bound by residues Thr268, Gly311, Gln315, and Gly412. ADP is bound by residues Gly412 and Asn416.

This sequence belongs to the FGGY kinase family. In terms of assembly, homotetramer and homodimer (in equilibrium). The phosphoenolpyruvate-dependent sugar phosphotransferase system (PTS), including enzyme I, and histidine-containing protein (HPr) are required for the phosphorylation, which leads to the activation of the enzyme.

It catalyses the reaction glycerol + ATP = sn-glycerol 3-phosphate + ADP + H(+). It participates in polyol metabolism; glycerol degradation via glycerol kinase pathway; sn-glycerol 3-phosphate from glycerol: step 1/1. With respect to regulation, activated by phosphorylation and inhibited by fructose 1,6-bisphosphate (FBP). In terms of biological role, key enzyme in the regulation of glycerol uptake and metabolism. Catalyzes the phosphorylation of glycerol to yield sn-glycerol 3-phosphate. The protein is Glycerol kinase of Streptococcus pneumoniae serotype 2 (strain D39 / NCTC 7466).